The following is a 603-amino-acid chain: HAUS augmin-like complex subunit 3 (603 aa).

S2 bears the N-acetylserine mark. 4 coiled-coil regions span residues 93–177, 305–336, 389–426, and 458–495; these read RLDD…TQLM, VDKE…DRSL, LSYE…LEML, and ENKK…SAQE.

The protein belongs to the HAUS3 family. Component of the HAUS augmin-like complex. The complex interacts with the gamma-tubulin ring complex and this interaction is required for spindle assembly. Interacts with EML3 (phosphorylated at 'Thr-881').

Its subcellular location is the cytoplasm. The protein resides in the cytoskeleton. It localises to the microtubule organizing center. The protein localises to the centrosome. It is found in the spindle. Functionally, contributes to mitotic spindle assembly, maintenance of centrosome integrity and completion of cytokinesis as part of the HAUS augmin-like complex. The chain is HAUS augmin-like complex subunit 3 (HAUS3) from Homo sapiens (Human).